Consider the following 559-residue polypeptide: Actin-binding protein WASF1 (559 aa).

Disordered regions lie at residues 170-202, 304-383, and 412-490; these read EDKRKEKRKQKQKNLDRPHEPEKVPRAPHDRRR, IENR…GVLH, and VHPL…HPST. The span at 182–202 shows a compositional bias: basic and acidic residues; the sequence is KNLDRPHEPEKVPRAPHDRRR. The segment covering 304–313 has biased composition (polar residues); it reads IENRPQSPAT. Over residues 322 to 332 the composition is skewed to pro residues; that stretch reads PTPPPPPPPLP. A compositionally biased stretch (low complexity) spans 333-346; it reads SALSTSSLRASMTS. Arginine 341 is modified (asymmetric dimethylarginine; alternate). Arginine 341 carries the post-translational modification Omega-N-methylarginine; alternate. Composition is skewed to pro residues over residues 347 to 360, 423 to 437, and 460 to 477; these read TPPPPVPPPPPPPA, LPPPPPPPPLPPPGI, and STAPGPHVPLMPPSPPSQ. Serine 489 is subject to Phosphoserine. A WH2 domain is found at 497 to 514; that stretch reads ARSVLLEAIRKGIQLRKV.

This sequence belongs to the SCAR/WAVE family. As to quaternary structure, component of the WAVE1 complex composed of ABI2, CYFIP1 or CYFIP2, BRK1, NCKAP1 and WASF1/WAVE1. Within the complex, a heterodimer containing NCKAP1 and CYFIP1 interacts with a heterotrimer formed by WAVE1, ABI2 and BRK1. CYFIP2 binds to activated RAC1 which causes the complex to dissociate, releasing activated WASF1. The complex can also be activated by NCK1. Binds actin and the Arp2/3 complex. Interacts with BAIAP2. Interacts with SHANK3; the interaction mediates the association of SHANK3 with the WAVE1 complex. Interacts with ABI1 (via N-terminus). Interacts with SORBS2; this interaction greatly enhances phosphorylation by ABL1 and dephosphorylation by PTPN12 and might mediate partial to focal adhesion sites.

The protein localises to the cytoplasm. Its subcellular location is the cytoskeleton. It localises to the synapse. The protein resides in the cell junction. It is found in the focal adhesion. In terms of biological role, downstream effector molecule involved in the transmission of signals from tyrosine kinase receptors and small GTPases to the actin cytoskeleton. Promotes formation of actin filaments. Part of the WAVE complex that regulates lamellipodia formation. The WAVE complex regulates actin filament reorganization via its interaction with the Arp2/3 complex. As component of the WAVE1 complex, required for BDNF-NTRK2 endocytic trafficking and signaling from early endosomes. Also involved in the regulation of mitochondrial dynamics. The polypeptide is Actin-binding protein WASF1 (WASF1) (Pongo abelii (Sumatran orangutan)).